A 142-amino-acid polypeptide reads, in one-letter code: Large ribosomal subunit protein uL13 (142 aa).

The protein belongs to the universal ribosomal protein uL13 family. As to quaternary structure, part of the 50S ribosomal subunit.

Its function is as follows. This protein is one of the early assembly proteins of the 50S ribosomal subunit, although it is not seen to bind rRNA by itself. It is important during the early stages of 50S assembly. This chain is Large ribosomal subunit protein uL13, found in Shewanella denitrificans (strain OS217 / ATCC BAA-1090 / DSM 15013).